The chain runs to 72 residues: U1-sicaritoxin-Sdo1a (72 aa).

An N-terminal signal peptide occupies residues 1-24; it reads MMKKFTCFLLCATILCAIFCVSVA. Residues 25 to 41 constitute a propeptide that is removed on maturation; the sequence is EKFHKMKSDIERDETPM. 3 disulfides stabilise this stretch: Cys-43/Cys-61, Cys-50/Cys-64, and Cys-60/Cys-69.

As to expression, expressed by the venom gland.

The protein resides in the secreted. In Hexophthalma dolichocephala (Afrotropical spider), this protein is U1-sicaritoxin-Sdo1a.